The chain runs to 1383 residues: DNA-directed RNA polymerase subunit beta (1383 aa).

This sequence belongs to the RNA polymerase beta chain family. As to quaternary structure, the RNAP catalytic core consists of 2 alpha, 1 beta, 1 beta' and 1 omega subunit. When a sigma factor is associated with the core the holoenzyme is formed, which can initiate transcription.

The catalysed reaction is RNA(n) + a ribonucleoside 5'-triphosphate = RNA(n+1) + diphosphate. Functionally, DNA-dependent RNA polymerase catalyzes the transcription of DNA into RNA using the four ribonucleoside triphosphates as substrates. The chain is DNA-directed RNA polymerase subunit beta from Bartonella tribocorum (strain CIP 105476 / IBS 506).